A 309-amino-acid polypeptide reads, in one-letter code: MEEFLTVGLWGGEGGDRWSFVVNNGGIIGMEIVHANGIASITFKCGDEYGVLQHSRKFGGTGEGWKTDKISLNWPEEYLTSISGTVADLWQHIIIRSISFKTNKGTEYGPYGVVTGQPFSYSTEGGVIVGFHGRSGTLLDAIGAYVKIPQKKDNTLKMALPVPRGPGPWGGHGGMEWDDGVFPAIRELHLYVGDSVIHAIRVSYQSKDGEPLLSPKHGGEGGEPIDPIKLEVSKEFLIRIAGFYGPVEGSGSFKALRSITFYTNKAKYGPYGDEIGQAFTSSVAPGRVVGFHGRSGAYLDAIGVHMEYF.

Met1 carries the post-translational modification N-acetylmethionine. 2 consecutive Jacalin-type lectin domains span residues 4-148 (FLTV…YVKI) and 163-308 (PRGP…HMEY).

It belongs to the jacalin lectin family.

Functionally, D-mannose/D-glucose-binding lectin. Binds N-linked high-mannose-type glycans. Has a preference for smaller (Man(2)-Man(6)) high-mannose-type glycans to larger (Man(7)-Man(9)) ones. Recognizes both alpha1-6 extended and alpha1-3 extended monoantennary glycans. The addition of alpha1-2Man to the Man-alpha1-3Man-beta branch results in a significant loss of affinity, but beta1-2GlcNAc has some affinity. Has less affinity for biantennary glycans, and affinity is very weak for the biantennary complex-type N-glycans with bisecting GlcNAc. No affinity is observed for tri- and tetra-antennary glycans. Has mitogenic and hemagglutinating activities. The polypeptide is Agglutinin (Castanea crenata (Japanese chestnut)).